Here is a 1003-residue protein sequence, read N- to C-terminus: Methyl-CpG-binding domain protein 6 (1003 aa).

In terms of domain architecture, MBD spans 11–81 (DRAGGPVATS…KVFNFDPLAP (71 aa)). Residues 57–68 (DGTCKCGLECPL) form a required for interaction with ASXL1/2/3 region. Disordered stretches follow at residues 120-219 (TCSH…PPPA), 238-664 (VPSD…PLLF), and 683-1003 (ATLD…KLAP). 2 stretches are compositionally biased toward pro residues: residues 140-155 (PGPP…PPTT) and 268-287 (TPPP…PASQ). Composition is skewed to low complexity over residues 297–308 (LPLVLGPLGGAP), 319–328 (LASSLLSAAA), and 348–361 (AQAP…SLRP). Over residues 391-407 (APAPVPQPFSLPEPSQP) the composition is skewed to pro residues. The segment covering 408-426 (ILPSVLSLLGLPTPGPSHS) has biased composition (low complexity). The segment covering 439–456 (LPPPPTLSSGSPPQPRHP) has biased composition (pro residues). 2 stretches are compositionally biased toward low complexity: residues 460 to 498 (SLPG…PSEG) and 531 to 548 (GAGF…LSLG). The span at 570–589 (QPPPEPLLPPPGGPGPPLAP) shows a compositional bias: pro residues. A compositionally biased stretch (low complexity) spans 590–602 (GEPEGPSLLVASL). A compositionally biased stretch (pro residues) spans 603 to 617 (LPPPPSDLLPPPSAP). The segment covering 618–633 (PSNLLASFLPLLALGP) has biased composition (low complexity). Residues 635-649 (AGDGEGSAEGAGGPS) are compositionally biased toward gly residues. Over residues 650–662 (GEPFSGLGDLSPL) the composition is skewed to low complexity. Positions 707-718 (TSSVTTATTDPG) are enriched in polar residues. 3 stretches are compositionally biased toward low complexity: residues 732-761 (PPQL…LPSL), 768-778 (LLSGQLGLQLL), and 788-798 (SEASSPLACLL). Positions 805–817 (PEQPEAPCLPPES) are enriched in pro residues. Positions 818–837 (PASALEPEPARPPLSALAPP) are enriched in low complexity. A compositionally biased stretch (basic residues) spans 947 to 958 (RKSRRGRRRKYN). A compositionally biased stretch (polar residues) spans 959–969 (PTRNSNSSRQD). Basic residues predominate over residues 989 to 1003 (RPGRPAKNKRRKLAP).

As to quaternary structure, core component of the polycomb repressive deubiquitinase (PR-DUB) complex, at least composed of BAP1, one of ASXL1, ASXL2 or (probably) ASXL3, and one of MBD5 or MBD6. Distinct combinations of ASXL and MBD proteins may preferentially bind specific histone modification marks. The PR-DUB core associates with a number of accessory proteins, including FOXK1, FOXK2, KDM1B, HCFC1 and OGT; KDM1B specifically associates with ASXL2 PR-DUB complexes. Interacts (via MBD domain) with ASXL1, ASXL2 and ASXL3 (via PHD domain); the interaction is probably direct, mediates association with other PR-DUB complex core components.

It localises to the nucleus. The protein localises to the chromosome. Non-catalytic component of the polycomb repressive deubiquitinase (PR-DUB) complex, a complex that specifically mediates deubiquitination of histone H2A monoubiquitinated at 'Lys-120' (H2AK119ub1). Important for stability of PR-DUB components and stimulating its ubiquitinase activity. As part of the PR-DUB complex, associates with chromatin enriched in histone marks H3K4me1, H3K4me3, and H3K27Ac, but not in H3K27me3. MBD5 and MBD6 containing complexes associate with distinct chromatin regions enriched in genes involved in different pathways. Heterochromatin recruitment is not mediated by DNA methylation. The PR-DUB complex is an epigenetic regulator of gene expression, including genes involved in development, cell communication, signaling, cell proliferation and cell viability; may promote cancer cell growth. The chain is Methyl-CpG-binding domain protein 6 (MBD6) from Homo sapiens (Human).